The chain runs to 519 residues: Cilia- and flagella-associated protein 53 (519 aa).

Coiled-coil stretches lie at residues 80–107 and 210–339; these read NRHLQDALDQYQMGIDEKRERLRELLES and LAKE…QEEQ. Positions 498 to 519 are disordered; the sequence is TTAVHPFRRRDRRCSSSGGQMS.

The protein belongs to the CFAP53 family.

The protein resides in the cytoplasm. It localises to the cytoskeleton. The protein localises to the cilium axoneme. It is found in the cilium basal body. Microtubule inner protein (MIP) part of the dynein-decorated doublet microtubules (DMTs) in cilia axoneme, which is required for motile cilia beating. Regulates motility patterns of both 9+0 and 9+2 motile cilia through differential localization and recruitment of axonemal dynein components. Required for cilium motility within the spinal canal and Kuppfer's vesicle and is involved in the establishment of left-right symmetry during embryogenesis. This chain is Cilia- and flagella-associated protein 53, found in Danio rerio (Zebrafish).